The chain runs to 623 residues: Quinoprotein ethanol dehydrogenase (623 aa).

The N-terminal stretch at 1–34 (MTIRSLPAALSPLSMAVQAVLLVSSLALAPAANA) is a signal peptide. Ca(2+) contacts are provided by aspartate 45 and asparagine 51. Glutamate 95 is a pyrroloquinoline quinone binding site. Cysteine 139 and cysteine 140 are oxidised to a cystine. Residues arginine 145, threonine 189, and 207–209 (HGS) contribute to the pyrroloquinoline quinone site. Glutamate 213 contributes to the Ca(2+) binding site. Positions 242-279 (GRLNGKDSTPTGDVKAPSWPDDPTTETGKVESWSHGGG) are disordered. Ca(2+)-binding residues include asparagine 300 and aspartate 350. Aspartate 350 functions as the Proton acceptor in the catalytic mechanism. Arginine 378 is a pyrroloquinoline quinone binding site. The segment at 414 to 436 (RPVENEGQRPAKPLPGETKGKPV) is disordered. 2 WD repeats span residues 515 to 556 (EHNE…ELWK) and 559 to 601 (TGSG…LTKP). Tryptophan 523 and alanine 587 together coordinate pyrroloquinoline quinone.

It belongs to the bacterial PQQ dehydrogenase family. As to quaternary structure, homodimer. Requires pyrroloquinoline quinone as cofactor. The cofactor is Ca(2+).

Its subcellular location is the periplasm. The enzyme catalyses a primary alcohol + 2 Fe(III)-[cytochrome c] = an aldehyde + 2 Fe(II)-[cytochrome c] + 2 H(+). The catalysed reaction is ethanol + 2 Fe(III)-[cytochrome c] = acetaldehyde + 2 Fe(II)-[cytochrome c] + 2 H(+). It catalyses the reaction ethanol + A = acetaldehyde + AH2. It carries out the reaction 1-propanol + 2 Fe(III)-[cytochrome c] = propanal + 2 Fe(II)-[cytochrome c] + 2 H(+). The protein operates within alcohol metabolism; ethanol degradation; acetate from ethanol: step 1/2. With respect to regulation, enhanced by the presence of ethylamine or NH4(+) ions. Its function is as follows. Catalyzes the oxidation of ethanol and other primary alcohols to the corresponding aldehydes, except methanol, which is not a substrate. Uses a specific inducible cytochrome c550, encoded by the adjacent gene in the locus, as electron acceptor. Is a key enzyme of the carbon and energy metabolism during growth of P.putida on ethanol as the sole carbon and energy source. Displays lower activity on secondary alcohols, aldehydes and diols. Is not active with sugar alcohols such as glycerol and D-sorbitol. In vitro, reacts well with phenazine methosulfate (PMS) as an electron acceptor but not with NAD(P), potassium ferricyanide, or molecular oxygen. This is Quinoprotein ethanol dehydrogenase from Pseudomonas putida (Arthrobacter siderocapsulatus).